The sequence spans 532 residues: Eukaryotic translation initiation factor 4B1 (532 aa).

Disordered regions lie at residues 16 to 365, 401 to 434, and 451 to 532; these read EAER…LEEQ, KKLE…IIRG, and RFRQ…REGW. Residues 26-35 show a composition bias toward low complexity; it reads AEATAATADT. Gly residues-rich tracts occupy residues 105–120 and 132–147; these read RLGG…SGGR and WSGG…YGGG. Over residues 167–180 the composition is skewed to basic and acidic residues; the sequence is RADEVDDWGKEKKP. A Nuclear localization signal 1 motif is present at residues 177–184; it reads EKKPLPSF. Residues 193 to 217 are compositionally biased toward gly residues; the sequence is SGDGGGFGGGGSGFGGGGGGGGGGL. A Nuclear localization signal 2 motif is present at residues 237 to 244; sequence SSTFGSSF. A compositionally biased stretch (low complexity) spans 237–247; sequence SSTFGSSFGDS. Basic and acidic residues-rich tracts occupy residues 249 to 263 and 286 to 310; these read QEER…RKVE and RPRE…EAKK. A compositionally biased stretch (low complexity) spans 315 to 337; that stretch reads TSRPTSAHSSRPSSAQSNRSESS. Basic and acidic residues-rich tracts occupy residues 355–365, 401–416, 472–494, and 507–520; these read AKPREVLLEEQ, KKLE…KESD, ERTH…ERPR, and NEQR…KERG.

The protein belongs to the eIF-4 subunit B family. In terms of assembly, homodimer. Nonspherical monomer. mRNA-discriminating component of initiation complexes. In terms of processing, phosphorylated.

Its subcellular location is the nucleus. Promotes the eIF4F and eIF4A RNA-dependent ATP-hydrolysis activity with different efficiency depending on mRNAs, thus providing mRNA discrimination during initiation of translation. The chain is Eukaryotic translation initiation factor 4B1 from Arabidopsis thaliana (Mouse-ear cress).